We begin with the raw amino-acid sequence, 239 residues long: Adapter protein MecA (239 aa).

Basic and acidic residues predominate over residues 118–128; the sequence is EQRTKEKEAQG. A disordered region spans residues 118-137; it reads EQRTKEKEAQGSKRQKSSAR.

It belongs to the MecA family. Homodimer.

Functionally, enables the recognition and targeting of unfolded and aggregated proteins to the ClpC protease or to other proteins involved in proteolysis. The sequence is that of Adapter protein MecA from Staphylococcus aureus (strain Mu3 / ATCC 700698).